Reading from the N-terminus, the 472-residue chain is Eukaryotic translation initiation factor 2 subunit 3 (472 aa).

Alanine 2 carries the post-translational modification N-acetylalanine; partial. The 209-residue stretch at 39–247 (QATINIGTIG…YIVKKIPVPL (209 aa)) folds into the tr-type G domain. The segment at 48 to 55 (GHVAHGKS) is G1. 51–56 (AHGKST) is a binding site for GTP. The interval 76–80 (NITIK) is G2. The G3 stretch occupies residues 134–137 (DCPG). Residues 190 to 193 (NKID) and 225 to 227 (SAQ) contribute to the GTP site. The interval 190 to 193 (NKID) is G4. A G5 region spans residues 225–227 (SAQ). The tract at residues 457 to 469 (GQIRRGVTIKPTV) is interacts with CDC123.

Belongs to the TRAFAC class translation factor GTPase superfamily. Classic translation factor GTPase family. EIF2G subfamily. In terms of assembly, eukaryotic translation initiation factor 2 eIF2 is a heterotrimeric complex composed of an alpha (EIF2S1), a beta (EIF2S2) and a gamma (EIF2S3) chain. eIF2 is member of the 43S pre-initiation complex (43S PIC).

The protein localises to the cytoplasm. The protein resides in the cytosol. It carries out the reaction GTP + H2O = GDP + phosphate + H(+). In terms of biological role, member of the eIF2 complex that functions in the early steps of protein synthesis by forming a ternary complex with GTP and initiator tRNA. This complex binds to a 40S ribosomal subunit, followed by mRNA binding to form the 43S pre-initiation complex (43S PIC). Junction of the 60S ribosomal subunit to form the 80S initiation complex is preceded by hydrolysis of the GTP bound to eIF2 and release of an eIF2-GDP binary complex. In order for eIF2 to recycle and catalyze another round of initiation, the GDP bound to eIF2 must exchange with GTP by way of a reaction catalyzed by eIF-2B. The chain is Eukaryotic translation initiation factor 2 subunit 3 (EIF2S3) from Gallus gallus (Chicken).